The following is a 931-amino-acid chain: MSSSDLLKGEFDGLNSEHFNMMQYLTQDTDEDDGSMVSPTSSADSMHQNLGVQQQQQQMLQAQQRQNQNGIFQPRRFPESPAMTDPCGNVSSSSSSSHHSDPMFSPNEFNGYAGANDNGNQTMNNIQSQQLSQQQHQQTRGGNLMMPQQSSIHAQMQNMNAPQFWSQPGTAAVNQPTNTLAQLNLFNIIRGGADSGMPSPVLEMPRKRSRLDTPCETPRIAPSFAGIDGFPDENYSQQQAIRFSKFQEEQWSPLYDINAQPLQQLQVHVVADKGFNYNSNDNCFVNQKKNHFQISVNVEASDTMPPKYVNFNNRLVPIRDFKLSFCGVKAEMPSSEITIRQSRADRKPHTHTPVLFEIQERRMTKVCVPRLHFSETTLNNQRKQKNRPNPEQKFFLLVVRLFASIDESEHGVLIQSYASEKVIVRATNPGSFEPQDTDIGWQRNGGALYTQGAVSVGTEHQVESAKLTVAGDIYMSGRIINPSDIRLKEAITERETAEAIENLLKLRVVDYRYKPEVADIWGLDEQQRHRTGLIAQELQAVLPDAVRDIGDYLTIDEGRVFYETVMATQQLCRMTGDLDSKIDEKVAEISRRLNEYAVRKKLASSMASNLNGDNKSLSYSRCSLTSTATNATSQPKRSRKHRAIKQAQSCGSRLSQGTVVTLVSIMAACLLAMSALYVLDWHNRNYGYHQHFETNTPSTKGELANLVISPANFMPSFQPDAPILLEKCFNPSCKTYCCTDTPPVVEDSRAIATHGLDNGDEVYPESPSNRTNGIARAPNLEHMAFETGVEIRIPALNVTLDQRYCVERSCNKRKGIFNVFVPVSRYMPDVALEIEIKAPISKVVSNCGAFPSTEFNHKVCPLSRTQQSESPVPTSTRLFDNIFELSMGSFIQSAYRFRVGYSTETCFSEDSNGSYEEYNLIFYRMCTLSSS.

Over 1-658 (MSSSDLLKGE…SCGSRLSQGT (658 aa)) the chain is Cytoplasmic. The tract at residues 29 to 143 (TDEDDGSMVS…QQHQQTRGGN (115 aa)) is disordered. The span at 37-52 (VSPTSSADSMHQNLGV) shows a compositional bias: polar residues. Over residues 53-68 (QQQQQQMLQAQQRQNQ) the composition is skewed to low complexity. A compositionally biased stretch (polar residues) spans 117 to 126 (DNGNQTMNNI). Low complexity predominate over residues 127–138 (QSQQLSQQQHQQ). The segment at residues 169–436 (GTAAVNQPTN…TNPGSFEPQD (268 aa)) is a DNA-binding region (NDT80). Positions 483 to 582 (SDIRLKEAIT…RMTGDLDSKI (100 aa)) constitute a Peptidase S74 domain. The helical transmembrane segment at 659 to 679 (VVTLVSIMAACLLAMSALYVL) threads the bilayer. Over 680–931 (DWHNRNYGYH…FYRMCTLSSS (252 aa)) the chain is Lumenal. Asn797 and Asn912 each carry an N-linked (GlcNAc...) asparagine glycan.

Belongs to the MRF family. In terms of assembly, homotrimer. Interacts with myrf-2. Interacts (via C-terminus) with pan-1 (via LRR regions); the interaction promotes the role of myrf-1 in the synaptic remodeling of DD GABAergic motor neurons at the cell membrane. In terms of processing, myelin regulatory factor: Follows autocatalytic cleavage via the peptidase S74 domain. Autoprocessing is apparently constitutive and is essential for transcriptional activity. In terms of tissue distribution, widely expressed in many tissues, including neuronal, muscle and epidermal stem cells. In neurons, expressed in dorsal D (DD) GABAergic motor neurons.

It is found in the endoplasmic reticulum membrane. It localises to the nucleus. Its subcellular location is the apical cell membrane. The protein resides in the cytoplasm. In terms of biological role, constitutes a precursor of the transcription factor. Mediates the autocatalytic cleavage that releases the Myelin regulatory factor homolog 1, N-terminal component that specifically activates transcription of genes involved in synaptic rewiring during nervous system maturation. Functionally, membrane-bound part that has no transcription factor activity and remains attached to the endoplasmic reticulum membrane following cleavage. Transcription factor that specifically activates expression of genes involved in synaptic rewiring during nervous system maturation. Specifically required for dorsal D (DD) GABAergic motor neurons synaptic rewiring. Acts in complex with myrf-2 paralog. The chain is Myelin regulatory factor homolog 1 from Caenorhabditis elegans.